Here is a 304-residue protein sequence, read N- to C-terminus: Methionyl-tRNA formyltransferase (304 aa).

Position 110–113 (S110–P113) interacts with (6S)-5,6,7,8-tetrahydrofolate.

The protein belongs to the Fmt family.

The enzyme catalyses L-methionyl-tRNA(fMet) + (6R)-10-formyltetrahydrofolate = N-formyl-L-methionyl-tRNA(fMet) + (6S)-5,6,7,8-tetrahydrofolate + H(+). Its function is as follows. Attaches a formyl group to the free amino group of methionyl-tRNA(fMet). The formyl group appears to play a dual role in the initiator identity of N-formylmethionyl-tRNA by promoting its recognition by IF2 and preventing the misappropriation of this tRNA by the elongation apparatus. The chain is Methionyl-tRNA formyltransferase from Sulfurovum sp. (strain NBC37-1).